Consider the following 174-residue polypeptide: ATP synthase subunit delta (174 aa).

The protein belongs to the ATPase delta chain family. As to quaternary structure, F-type ATPases have 2 components, F(1) - the catalytic core - and F(0) - the membrane proton channel. F(1) has five subunits: alpha(3), beta(3), gamma(1), delta(1), epsilon(1). F(0) has three main subunits: a(1), b(2) and c(10-14). The alpha and beta chains form an alternating ring which encloses part of the gamma chain. F(1) is attached to F(0) by a central stalk formed by the gamma and epsilon chains, while a peripheral stalk is formed by the delta and b chains.

It is found in the cell inner membrane. Its function is as follows. F(1)F(0) ATP synthase produces ATP from ADP in the presence of a proton or sodium gradient. F-type ATPases consist of two structural domains, F(1) containing the extramembraneous catalytic core and F(0) containing the membrane proton channel, linked together by a central stalk and a peripheral stalk. During catalysis, ATP synthesis in the catalytic domain of F(1) is coupled via a rotary mechanism of the central stalk subunits to proton translocation. In terms of biological role, this protein is part of the stalk that links CF(0) to CF(1). It either transmits conformational changes from CF(0) to CF(1) or is implicated in proton conduction. This is ATP synthase subunit delta from Francisella tularensis subsp. mediasiatica (strain FSC147).